A 67-amino-acid polypeptide reads, in one-letter code: DNA gyrase inhibitor YacG (67 aa).

C8, C11, C27, and C31 together coordinate Zn(2+).

This sequence belongs to the DNA gyrase inhibitor YacG family. Interacts with GyrB. Zn(2+) serves as cofactor.

Functionally, inhibits all the catalytic activities of DNA gyrase by preventing its interaction with DNA. Acts by binding directly to the C-terminal domain of GyrB, which probably disrupts DNA binding by the gyrase. The polypeptide is DNA gyrase inhibitor YacG (Ralstonia pickettii (strain 12J)).